The chain runs to 269 residues: Phosphonoacetaldehyde hydrolase (269 aa).

The Nucleophile role is filled by Asp9. Mg(2+) is bound by residues Asp9 and Ala11. The active-site Schiff-base intermediate with substrate is the Lys50. Asp184 contributes to the Mg(2+) binding site.

Belongs to the HAD-like hydrolase superfamily. PhnX family. Homodimer. The cofactor is Mg(2+).

It carries out the reaction phosphonoacetaldehyde + H2O = acetaldehyde + phosphate + H(+). Involved in phosphonate degradation. In Lysinibacillus sphaericus (strain C3-41), this protein is Phosphonoacetaldehyde hydrolase.